A 640-amino-acid polypeptide reads, in one-letter code: PAN2-PAN3 deadenylation complex subunit PAN3 (640 aa).

The C3H1-type zinc finger occupies 17–46; sequence ENKDILCRNVLIYGHCRYEDQGCTYNHDQN. Composition is skewed to polar residues over residues 43-53 and 63-87; these read HDQNKNSSQPE and DSPS…SQAA. Residues 43–101 are disordered; sequence HDQNKNSSQPEAPSKKMFNVDSPSFTPSGQSTVLPKKTTLSSQAASAAPFTPRGGGTPT. The interval 237-498 is pseudokinase domain; it reads QVIPNSGLPQ…TIEHFMTGIA (262 aa). Residues N263, R288, 338 to 345, and 397 to 398 contribute to the ATP site; these read DFHPLSKT and SK. Residues 499–537 adopt a coiled-coil conformation; the sequence is SQMTTFFDLALQDNDEKLFHLAREVENGRIARSLMKLLT. Residues 538 to 640 form a knob domain region; the sequence is ILERGDYDGV…SKTGAPGANT (103 aa).

It belongs to the protein kinase superfamily. PAN3 family. In terms of assembly, homodimer. Forms a heterotrimer with a catalytic subunit PAN2 to form the poly(A)-nuclease (PAN) deadenylation complex. Interacts (via PAM-2 motif) with poly(A)-binding protein PAB1 (via PABC domain), conferring substrate specificity of the enzyme complex.

It is found in the cytoplasm. In terms of biological role, regulatory subunit of the poly(A)-nuclease (PAN) deadenylation complex, one of two cytoplasmic mRNA deadenylases involved in mRNA turnover. PAN specifically shortens poly(A) tails of RNA and the activity is stimulated by poly(A)-binding protein PAB1. PAN deadenylation is followed by rapid degradation of the shortened mRNA tails by the CCR4-NOT complex. Deadenylated mRNAs are then degraded by two alternative mechanisms, namely exosome-mediated 3'-5' exonucleolytic degradation, or deadenylation-dependent mRNA decaping and subsequent 5'-3' exonucleolytic degradation by XRN1. May also be involved in post-transcriptional maturation of mRNA poly(A) tails. PAN3 acts as a positive regulator for PAN activity, recruiting the catalytic subunit PAN2 to mRNA via its interaction with RNA and with PAB1. The sequence is that of PAN2-PAN3 deadenylation complex subunit PAN3 from Chaetomium thermophilum (strain DSM 1495 / CBS 144.50 / IMI 039719) (Thermochaetoides thermophila).